A 399-amino-acid polypeptide reads, in one-letter code: Proteinase-activated receptor 2 (399 aa).

A signal peptide spans 1 to 25 (MRSLSLAWLLGGITLLAASVSCSRT). The propeptide at 26–38 (ENLAPGRNNSKGR) is removed for receptor activation. N-linked (GlcNAc...) asparagine glycosylation occurs at asparagine 33. At 39 to 73 (SLIGRLETQPPITGKGVPVEPGFSIDEFSASILTG) the chain is on the extracellular side. Residues 74-103 (KLTTVFLPVVYIIVFVIGLPSNGMALWIFL) form a helical membrane-spanning segment. At 104–110 (FRTKKKH) the chain is on the cytoplasmic side. Residues 111–139 (PAVIYMANLALADLLSVIWFPLKISYHLH) traverse the membrane as a helical segment. Residues 140–151 (GNNWVYGEALCK) lie on the Extracellular side of the membrane. Cysteine 150 and cysteine 228 are joined by a disulfide. Residues 152–179 (VLIGFFYGNMYCSILFMTCLSVQRYWVI) traverse the membrane as a helical segment. The Cytoplasmic segment spans residues 180-185 (VNPMGH). A helical transmembrane segment spans residues 186–213 (PRKKANIAVGVSLAIWLLIFLVTIPLYV). At 214 to 237 (MKQTIYIPALNITTCHDVLPEEVL) the chain is on the extracellular side. Asparagine 224 carries N-linked (GlcNAc...) asparagine glycosylation. A helical transmembrane segment spans residues 238–271 (VGDMFNYFLSLAIGVFLFPALLTASAYVLMIKTL). The Cytoplasmic portion of the chain corresponds to 272–279 (RSSAMDEH). The helical transmembrane segment at 280–319 (SEKKRQRAIRLIITVLAMYFICFAPSNLLLVVHYFLIKTQ) threads the bilayer. Topologically, residues 320–325 (RQSHVY) are extracellular. Residues 326-349 (ALYLVALCLSTLNSCIDPFVYYFV) traverse the membrane as a helical segment. Topologically, residues 350 to 399 (SKDFRDHARNALLCRSVRTVNRMQISLSSNKFSRKSGSYSSSSTSVKTSY) are cytoplasmic. A lipid anchor (S-palmitoyl cysteine) is attached at cysteine 363.

Belongs to the G-protein coupled receptor 1 family. In terms of assembly, interacts with TLR4, COPS5 and TMED2. Interacts with GNAQ, GNA11, GNA12, GNA13 and GNA14. Post-translationally, a proteolytic cleavage generates a new N-terminus that functions as a tethered ligand. Activating serine proteases include trypsin, mast cell tryptase, coagulation factors VII and Xa, myeloblastin/PRTN3 and membrane-type serine protease 1/ST14. Proposed subsequent cleavage by serine proteases is leading to receptor deactivation and include neutrophil elastase and cathepsin G. At least in part, implicated proteases are also shown to activate the receptor; the glycosylation status of the receptor is thought to contribute to the difference. N-glycosylated and sialylated. In terms of processing, multiple phosphorylated on serine and threonine residues in the cytoplasmic region upon receptor activation; required for receptor desensitization and recruitment of beta-arrestin. Post-translationally, monoubiquitinated by Cbl at the plasma membrane and in early endosomes; not required for receptor endocytosis but for translocation to late endosomes or lysosomes. Deubiquitination involves Stambp and Usp8; required for lysosomal trafficking and receptor degradation.

The protein localises to the cell membrane. Functionally, receptor for trypsin and trypsin-like enzymes coupled to G proteins. Its function is mediated through the activation of several signaling pathways including phospholipase C (PLC), intracellular calcium, mitogen-activated protein kinase (MAPK), I-kappaB kinase/NF-kappaB and Rho. Can also be transactivated by cleaved F2r/Par1. Involved in modulation of inflammatory responses and regulation of innate and adaptive immunity, and acts as a sensor for proteolytic enzymes generated during infection. Generally is promoting inflammation. Can signal synergistically with Tlr4 and probably Tlr2 in inflammatory responses and modulates Tlr3 signaling. Has a protective role in establishing the endothelial barrier; the activity involves coagulation factor X. Regulates endothelial cell barrier integrity during neutrophil extravasation, probably following proteolytic cleavage by PRTN3. Proposed to have a bronchoprotective role in airway epithelium, but also shown to compromise the airway epithelial barrier by interrupting E-cadherin adhesion. Involved in the regulation of vascular tone; activation results in hypotension presumably mediated by vasodilation. Associates with a subset of G proteins alpha subunits such as GNAQ, GNA11, GNA14, GNA12 and GNA13, but probably not with G(o)-alpha, G(i) subunit alpha-1 and G(i) subunit alpha-2. Believed to be a class B receptor which internalizes as a complex with arrestin and traffic with it to endosomal vesicles, presumably as desensitized receptor, for extended periods of time. Mediates inhibition of TNF-alpha stimulated JNK phosphorylation via coupling to GNAQ and GNA11; the function involves dissociation of Ripk1 and Tradd from Tnfr1. Mediates phosphorylation of nuclear factor NF-kappa-B RELA subunit at 'Ser-536'; the function involves Ikbkb and is predominantly independent of G proteins. Involved in cellular migration. Involved in cytoskeletal rearrangement and chemotaxis through beta-arrestin-promoted scaffolds; the function is independent of GNAQ and GNA11 and involves promotion of cofilin dephosphorylation and actin filament severing. Induces redistribution of Cops5 from the plasma membrane to the cytosol and activation of the JNK cascade is mediated by Cops5. Involved in the recruitment of leukocytes to the sites of inflammation and is the major PAR receptor capable of modulating eosinophil function such as pro-inflammatory cytokine secretion, superoxide production and degranulation. During inflammation promotes dendritic cell maturation, trafficking to the lymph nodes and subsequent T-cell activation. Involved in antimicrobial response of innate immune cells; activation enhances phagocytosis of Gram-positive and killing of Gram-negative bacteria. Acts synergistically with interferon-gamma in enhancing antiviral responses. Mediates activation of pro-inflammatory and pro-fibrotic responses in fibroblasts, triggered by coagulation factor Xa (F10). Probably mediates activation of barrier protective signaling responses in endothelial cells, triggered by coagulation factor Xa (F10). This Mus musculus (Mouse) protein is Proteinase-activated receptor 2 (F2rl1).